The following is a 296-amino-acid chain: Cytidine deaminase (296 aa).

2 CMP/dCMP-type deaminase domains span residues 52–167 (SPVE…YLPD) and 191–296 (QGHD…YISL). 93–95 (NQE) lines the substrate pocket. Residue His-106 coordinates Zn(2+). Residue Glu-108 is the Proton donor of the active site. The Zn(2+) site is built by Cys-133 and Cys-136.

This sequence belongs to the cytidine and deoxycytidylate deaminase family. As to quaternary structure, homodimer. It depends on Zn(2+) as a cofactor.

It carries out the reaction cytidine + H2O + H(+) = uridine + NH4(+). It catalyses the reaction 2'-deoxycytidine + H2O + H(+) = 2'-deoxyuridine + NH4(+). Its function is as follows. This enzyme scavenges exogenous and endogenous cytidine and 2'-deoxycytidine for UMP synthesis. The chain is Cytidine deaminase from Mannheimia succiniciproducens (strain KCTC 0769BP / MBEL55E).